Reading from the N-terminus, the 453-residue chain is Chromosomal replication initiator protein DnaA (453 aa).

The interval 1-71 is domain I, interacts with DnaA modulators; the sequence is MSEKEIWEKV…QAILFDVVGY (71 aa). The interval 71 to 114 is domain II; it reads YEVKPHFITTEELANYSNNETATPKEATKPSTETTEDNHVLGRE. Residues 115 to 331 form a domain III, AAA+ region region; that stretch reads QFNAHNTFDT…GALTRLLAYS (217 aa). ATP is bound by residues Gly-159, Gly-161, Lys-162, and Thr-163. The domain IV, binds dsDNA stretch occupies residues 332 to 453; the sequence is QLLGKPITTE…ENLEKEIRNV (122 aa).

It belongs to the DnaA family. Oligomerizes as a right-handed, spiral filament on DNA at oriC.

The protein localises to the cytoplasm. Its function is as follows. Plays an essential role in the initiation and regulation of chromosomal replication. ATP-DnaA binds to the origin of replication (oriC) to initiate formation of the DNA replication initiation complex once per cell cycle. Binds the DnaA box (a 9 base pair repeat at the origin) and separates the double-stranded (ds)DNA. Forms a right-handed helical filament on oriC DNA; dsDNA binds to the exterior of the filament while single-stranded (ss)DNA is stabiized in the filament's interior. The ATP-DnaA-oriC complex binds and stabilizes one strand of the AT-rich DNA unwinding element (DUE), permitting loading of DNA polymerase. After initiation quickly degrades to an ADP-DnaA complex that is not apt for DNA replication. Binds acidic phospholipids. This Staphylococcus aureus (strain MRSA252) protein is Chromosomal replication initiator protein DnaA.